Here is a 127-residue protein sequence, read N- to C-terminus: Holo-[acyl-carrier-protein] synthase (127 aa).

Residues Asp-9 and Glu-58 each contribute to the Mg(2+) site.

It belongs to the P-Pant transferase superfamily. AcpS family. It depends on Mg(2+) as a cofactor.

Its subcellular location is the cytoplasm. The enzyme catalyses apo-[ACP] + CoA = holo-[ACP] + adenosine 3',5'-bisphosphate + H(+). Transfers the 4'-phosphopantetheine moiety from coenzyme A to a Ser of acyl-carrier-protein. This is Holo-[acyl-carrier-protein] synthase from Shewanella sp. (strain ANA-3).